The sequence spans 206 residues: Thiamine-phosphate synthase (206 aa).

Residues 37–41 (QYRNK) and N69 each bind 4-amino-2-methyl-5-(diphosphooxymethyl)pyrimidine. 2 residues coordinate Mg(2+): D70 and D89. S108 serves as a coordination point for 4-amino-2-methyl-5-(diphosphooxymethyl)pyrimidine. 135-137 (SST) is a 2-[(2R,5Z)-2-carboxy-4-methylthiazol-5(2H)-ylidene]ethyl phosphate binding site. K138 is a 4-amino-2-methyl-5-(diphosphooxymethyl)pyrimidine binding site. Residues G165 and 185 to 186 (IS) contribute to the 2-[(2R,5Z)-2-carboxy-4-methylthiazol-5(2H)-ylidene]ethyl phosphate site.

The protein belongs to the thiamine-phosphate synthase family. Requires Mg(2+) as cofactor.

The catalysed reaction is 2-[(2R,5Z)-2-carboxy-4-methylthiazol-5(2H)-ylidene]ethyl phosphate + 4-amino-2-methyl-5-(diphosphooxymethyl)pyrimidine + 2 H(+) = thiamine phosphate + CO2 + diphosphate. It carries out the reaction 2-(2-carboxy-4-methylthiazol-5-yl)ethyl phosphate + 4-amino-2-methyl-5-(diphosphooxymethyl)pyrimidine + 2 H(+) = thiamine phosphate + CO2 + diphosphate. The enzyme catalyses 4-methyl-5-(2-phosphooxyethyl)-thiazole + 4-amino-2-methyl-5-(diphosphooxymethyl)pyrimidine + H(+) = thiamine phosphate + diphosphate. It participates in cofactor biosynthesis; thiamine diphosphate biosynthesis; thiamine phosphate from 4-amino-2-methyl-5-diphosphomethylpyrimidine and 4-methyl-5-(2-phosphoethyl)-thiazole: step 1/1. Condenses 4-methyl-5-(beta-hydroxyethyl)thiazole monophosphate (THZ-P) and 2-methyl-4-amino-5-hydroxymethyl pyrimidine pyrophosphate (HMP-PP) to form thiamine monophosphate (TMP). The protein is Thiamine-phosphate synthase of Azoarcus sp. (strain BH72).